The sequence spans 893 residues: Translation initiation factor IF-2 (893 aa).

Disordered stretches follow at residues 51-203 and 216-299; these read KEHG…AEAE and EENE…TSMQ. 3 stretches are compositionally biased toward basic and acidic residues: residues 102–203, 216–238, and 245–261; these read ALEE…AEAE, EENE…DADY, and HARE…EQQP. The 170-residue stretch at 392–561 folds into the tr-type G domain; the sequence is GRAPVVTIMG…LLQSEVLELT (170 aa). Residues 401-408 are G1; it reads GHVDHGKT. 401–408 contacts GTP; that stretch reads GHVDHGKT. A G2 region spans residues 426–430; the sequence is GITQH. Residues 447–450 are G3; that stretch reads DTPG. Residues 447–451 and 501–504 contribute to the GTP site; these read DTPGH and NKID. The tract at residues 501 to 504 is G4; it reads NKID. A G5 region spans residues 537–539; it reads SAK.

Belongs to the TRAFAC class translation factor GTPase superfamily. Classic translation factor GTPase family. IF-2 subfamily.

It localises to the cytoplasm. Functionally, one of the essential components for the initiation of protein synthesis. Protects formylmethionyl-tRNA from spontaneous hydrolysis and promotes its binding to the 30S ribosomal subunits. Also involved in the hydrolysis of GTP during the formation of the 70S ribosomal complex. This chain is Translation initiation factor IF-2, found in Aliivibrio fischeri (strain ATCC 700601 / ES114) (Vibrio fischeri).